The following is a 153-amino-acid chain: uncharacterized protein (153 aa).

An N-terminal signal peptide occupies residues methionine 1–alanine 19. Residues arginine 46, glutamate 54, and arginine 88 contribute to the active site.

Belongs to the thermonuclease family.

This is an uncharacterized protein from Escherichia coli O157:H7.